Consider the following 367-residue polypeptide: Porin Omp2a (367 aa).

Positions 1 to 22 are cleaved as a signal peptide; the sequence is MNIKSLLLGSAAALVAASGAQA.

The protein belongs to the alphaproteobacteria porin family. Monomer.

It is found in the cell outer membrane. Its function is as follows. Forms passive diffusion pores that allow small molecular weight hydrophilic materials across the outer membrane. This chain is Porin Omp2a (omp2a), found in Brucella suis.